Reading from the N-terminus, the 959-residue chain is UPF0182 protein MAE_41360 (959 aa).

The next 9 membrane-spanning stretches (helical) occupy residues 13-33 (PILLFLGCLVIGQLGVLVVAN), 50-70 (LSWQLGLGWGSAILSLLFIFT), 99-119 (LLGLLIIATGIGAWIGSMLLY), 156-176 (DISSNLWQGLIIAFLVLGLLI), 184-204 (IISIVFTVMLSFIIAGQWANF), 239-259 (LWLTGVGIYTLFAVILTYLFS), 276-296 (LRHLYALWSGLMGLLVLHHII), 319-339 (VGQFIEIILGIIAGITSIWLG), and 362-382 (FFPYLVPVFLYLIVWISGTII).

It belongs to the UPF0182 family.

Its subcellular location is the cell membrane. The protein is UPF0182 protein MAE_41360 of Microcystis aeruginosa (strain NIES-843 / IAM M-2473).